Here is an 872-residue protein sequence, read N- to C-terminus: Cellulose synthase catalytic subunit [UDP-forming] (872 aa).

Helical transmembrane passes span 30 to 50 (SAFSATLGCFWMILAWIFIPL), 151 to 171 (ILGIIVTFSLILALICVTQPF), 173 to 193 (PLAQFIFLMLLWGGALIVRRM), and 230 to 250 (LVCGLILLFAETYAWIVLVLG). A catalytic subdomain A region spans residues 271-364 (LWPSVDIFVP…FVSIFDCDHV (94 aa)). Asp-313 is a catalytic residue. Substrate contacts are provided by Asp-360 and Asp-362. Residues 441–501 (KPLDEIGGIA…GQRIRWARGM (61 aa)) form a catalytic subdomain B region. Asp-457 is an active-site residue. The next 5 helical transmembrane spans lie at 525-545 (VNAMFHFLSGIPRLIFLTAPL), 547-567 (FLLLHAYIIYAPALMIALFVL), 592-612 (IYETVLAWYIAPPTLVALINP), 640-660 (IFLVLLNLVGVAVGIWRYFYG), and 668-688 (VVVSMVWVFYNLIVLGGAVAV). In terms of domain architecture, PilZ spans 694–790 (QVRRSHRVEM…QHIDFVQCTF (97 aa)). The chain crosses the membrane as a helical span at residues 833-853 (SVKGIFRVLTSLVSWVVSFIP).

This sequence belongs to the glycosyltransferase 2 family. It depends on Mg(2+) as a cofactor.

The protein localises to the cell inner membrane. The enzyme catalyses [(1-&gt;4)-beta-D-glucosyl](n) + UDP-alpha-D-glucose = [(1-&gt;4)-beta-D-glucosyl](n+1) + UDP + H(+). Its pathway is glycan metabolism; bacterial cellulose biosynthesis. Activated by bis-(3'-5') cyclic diguanylic acid (c-di-GMP). Functionally, catalytic subunit of cellulose synthase. It polymerizes uridine 5'-diphosphate glucose to cellulose, which is produced as an extracellular component for mechanical and chemical protection at the onset of the stationary phase, when the cells exhibit multicellular behavior (rdar morphotype). Coexpression of cellulose and thin aggregative fimbriae leads to a hydrophobic network with tightly packed cells embedded in a highly inert matrix. This Escherichia coli O157:H7 protein is Cellulose synthase catalytic subunit [UDP-forming] (bcsA).